Here is a 670-residue protein sequence, read N- to C-terminus: DNA ligase (670 aa).

NAD(+) is bound by residues D34 to D38, S83 to L84, and E112. K114 acts as the N6-AMP-lysine intermediate in catalysis. NAD(+)-binding residues include R135, E169, K285, and K309. Zn(2+) is bound by residues C403, C406, C421, and C426. In terms of domain architecture, BRCT spans P589 to Q670.

It belongs to the NAD-dependent DNA ligase family. LigA subfamily. It depends on Mg(2+) as a cofactor. Requires Mn(2+) as cofactor.

It carries out the reaction NAD(+) + (deoxyribonucleotide)n-3'-hydroxyl + 5'-phospho-(deoxyribonucleotide)m = (deoxyribonucleotide)n+m + AMP + beta-nicotinamide D-nucleotide.. Its function is as follows. DNA ligase that catalyzes the formation of phosphodiester linkages between 5'-phosphoryl and 3'-hydroxyl groups in double-stranded DNA using NAD as a coenzyme and as the energy source for the reaction. It is essential for DNA replication and repair of damaged DNA. In Geobacillus thermodenitrificans (strain NG80-2), this protein is DNA ligase.